The chain runs to 103 residues: Astacin-like peptidase p16 (103 aa).

Residues 1–103 (NAIPGQHYRW…DAFSRDGSPM (103 aa)) form the Peptidase M12A domain.

The cofactor is Zn(2+).

Its function is as follows. Active against casein. Has a role as a digestive enzyme. This chain is Astacin-like peptidase p16, found in Argiope aurantia (Black-and-yellow garden spider).